A 312-amino-acid chain; its full sequence is Nucleosome assembly protein 1-like 4 (312 aa).

Positions 24-78 form a coiled coil; sequence VETLKNKLQALAEQHVDVLESLAPSVRKRVDVLMEIQSQHDELEVKFFEEKAALE. A Nuclear export signal motif is present at residues 45-60; that stretch reads LAPSVRKRVDVLMEIQ. The interval 288-312 is disordered; the sequence is EDYGASWVDDEEEDDNDDEYSDEEA.

This sequence belongs to the nucleosome assembly protein (NAP) family.

The protein localises to the nucleus. The protein resides in the cytoplasm. Its function is as follows. May modulate chromatin structure by regulation of nucleosome assembly/disassembly. This Oryza sativa subsp. indica (Rice) protein is Nucleosome assembly protein 1-like 4.